The primary structure comprises 60 residues: Large ribosomal subunit protein uL30 (60 aa).

It belongs to the universal ribosomal protein uL30 family. In terms of assembly, part of the 50S ribosomal subunit.

The chain is Large ribosomal subunit protein uL30 from Polaromonas naphthalenivorans (strain CJ2).